The chain runs to 266 residues: MRLNIAPAPWPGAPVVVLSAGLGGGGGYWLAQRAALEEQYQLVSYDHNGTGENAGPLPAGYSLATMAGELFSALQAAGIARFALVGHALGALIGLQLALDRPEAVSALALVNGWLSLSPHTRRCFQVRERLLHAGGAQAWVEAQPLFLYPAEWMAARLPRLEAEDALAISHFQGKENLLKRLQALKQADFSRRASAIACPTLIISAADDLLVPASCSRVLQTAIPGSQLVEMPWGGHACNVTDADTFNTILRDGLSAMLPVARETR.

The region spanning 14-119 (PVVVLSAGLG…LVNGWLSLSP (106 aa)) is the AB hydrolase-1 domain.

The protein belongs to the AB hydrolase superfamily. Hydrolase RutD family.

The enzyme catalyses carbamate + 2 H(+) = NH4(+) + CO2. In terms of biological role, involved in pyrimidine catabolism. May facilitate the hydrolysis of carbamate, a reaction that can also occur spontaneously. The protein is Putative carbamate hydrolase RutD of Klebsiella pneumoniae subsp. pneumoniae (strain ATCC 700721 / MGH 78578).